Reading from the N-terminus, the 188-residue chain is ATP synthase subunit delta (188 aa).

It belongs to the ATPase delta chain family. F-type ATPases have 2 components, F(1) - the catalytic core - and F(0) - the membrane proton channel. F(1) has five subunits: alpha(3), beta(3), gamma(1), delta(1), epsilon(1). F(0) has three main subunits: a(1), b(2) and c(10-14). The alpha and beta chains form an alternating ring which encloses part of the gamma chain. F(1) is attached to F(0) by a central stalk formed by the gamma and epsilon chains, while a peripheral stalk is formed by the delta and b chains.

The protein localises to the cell inner membrane. In terms of biological role, f(1)F(0) ATP synthase produces ATP from ADP in the presence of a proton or sodium gradient. F-type ATPases consist of two structural domains, F(1) containing the extramembraneous catalytic core and F(0) containing the membrane proton channel, linked together by a central stalk and a peripheral stalk. During catalysis, ATP synthesis in the catalytic domain of F(1) is coupled via a rotary mechanism of the central stalk subunits to proton translocation. Its function is as follows. This protein is part of the stalk that links CF(0) to CF(1). It either transmits conformational changes from CF(0) to CF(1) or is implicated in proton conduction. In Sinorhizobium fredii (strain NBRC 101917 / NGR234), this protein is ATP synthase subunit delta.